Consider the following 152-residue polypeptide: Histone H2B.1 (152 aa).

A compositionally biased stretch (basic and acidic residues) spans 1 to 23; it reads MAPKAEKKPAEKKPAAGEEKSAE. The tract at residues 1 to 60 is disordered; it reads MAPKAEKKPAEKKPAAGEEKSAEKAPAGKKPKAEKRLPASKASSKEGGAGDKKGRKKAKK. An N6-acetyllysine mark is found at Lys-7 and Lys-35. A Glycyl lysine isopeptide (Lys-Gly) (interchain with G-Cter in ubiquitin) cross-link involves residue Lys-148.

This sequence belongs to the histone H2B family. In terms of assembly, the nucleosome is a histone octamer containing two molecules each of H2A, H2B, H3 and H4 assembled in one H3-H4 heterotetramer and two H2A-H2B heterodimers. The octamer wraps approximately 147 bp of DNA. In terms of processing, can be acetylated to form H2BK6ac and H2BK33ac. Monoubiquitinated by BRE1 to form H2BK143ub1 and deubiquitinated by UBP26. Required for heterochromatic histone H3 di- and trimethylation at H3K4me. May give a specific tag for epigenetic transcriptional activation.

The protein localises to the nucleus. It is found in the chromosome. Core component of nucleosome. Nucleosomes wrap and compact DNA into chromatin, limiting DNA accessibility to the cellular machineries which require DNA as a template. Histones thereby play a central role in transcription regulation, DNA repair, DNA replication and chromosomal stability. DNA accessibility is regulated via a complex set of post-translational modifications of histones, also called histone code, and nucleosome remodeling. The protein is Histone H2B.1 of Oryza sativa subsp. indica (Rice).